A 528-amino-acid chain; its full sequence is Propionate catabolism operon regulatory protein (528 aa).

Residues 218–461 (MLGQSPQMEQ…RNMMERLALF (244 aa)) enclose the Sigma-54 factor interaction domain. ATP is bound at residue 318-327 (AHGGTLFLDE). Positions 508–527 (KTAAANYLGISRTTFWRRLK) form a DNA-binding region, H-T-H motif.

Involved in the transcriptional regulation of the propionate catabolism operon. The chain is Propionate catabolism operon regulatory protein (prpR) from Escherichia coli (strain K12).